Here is a 628-residue protein sequence, read N- to C-terminus: U-box domain-containing protein 10 (628 aa).

In terms of domain architecture, U-box spans 242–316 (TIPEDFLCPI…SQWCTKHNIE (75 aa)). ARM repeat units follow at residues 373–413 (TDNR…NLSI), 415–454 (EHNK…SLSL), 456–495 (DENK…NLCI), 497–537 (QGNK…VLAS), and 539–578 (QVAK…CLCK).

The catalysed reaction is S-ubiquitinyl-[E2 ubiquitin-conjugating enzyme]-L-cysteine + [acceptor protein]-L-lysine = [E2 ubiquitin-conjugating enzyme]-L-cysteine + N(6)-ubiquitinyl-[acceptor protein]-L-lysine.. Its pathway is protein modification; protein ubiquitination. Functionally, functions as an E3 ubiquitin ligase. This is U-box domain-containing protein 10 (PUB10) from Arabidopsis thaliana (Mouse-ear cress).